A 586-amino-acid chain; its full sequence is 2-succinyl-5-enolpyruvyl-6-hydroxy-3-cyclohexene-1-carboxylate synthase (586 aa).

The protein belongs to the TPP enzyme family. MenD subfamily. Homodimer. Mg(2+) is required as a cofactor. Requires Mn(2+) as cofactor. It depends on thiamine diphosphate as a cofactor.

The enzyme catalyses isochorismate + 2-oxoglutarate + H(+) = 5-enolpyruvoyl-6-hydroxy-2-succinyl-cyclohex-3-ene-1-carboxylate + CO2. The protein operates within quinol/quinone metabolism; 1,4-dihydroxy-2-naphthoate biosynthesis; 1,4-dihydroxy-2-naphthoate from chorismate: step 2/7. Its pathway is quinol/quinone metabolism; menaquinone biosynthesis. In terms of biological role, catalyzes the thiamine diphosphate-dependent decarboxylation of 2-oxoglutarate and the subsequent addition of the resulting succinic semialdehyde-thiamine pyrophosphate anion to isochorismate to yield 2-succinyl-5-enolpyruvyl-6-hydroxy-3-cyclohexene-1-carboxylate (SEPHCHC). This is 2-succinyl-5-enolpyruvyl-6-hydroxy-3-cyclohexene-1-carboxylate synthase from Natronomonas pharaonis (strain ATCC 35678 / DSM 2160 / CIP 103997 / JCM 8858 / NBRC 14720 / NCIMB 2260 / Gabara) (Halobacterium pharaonis).